Consider the following 124-residue polypeptide: uncharacterized protein (124 aa).

Residues 1-22 (MGTSSVLLMIASSLILLEVVMT) form the signal peptide.

This is an uncharacterized protein from Caenorhabditis elegans.